Consider the following 420-residue polypeptide: 3-isopropylmalate dehydratase large subunit (420 aa).

Residues Cys-301, Cys-361, and Cys-364 each coordinate [4Fe-4S] cluster.

It belongs to the aconitase/IPM isomerase family. LeuC type 2 subfamily. As to quaternary structure, heterodimer of LeuC and LeuD. It depends on [4Fe-4S] cluster as a cofactor.

It catalyses the reaction (2R,3S)-3-isopropylmalate = (2S)-2-isopropylmalate. It participates in amino-acid biosynthesis; L-leucine biosynthesis; L-leucine from 3-methyl-2-oxobutanoate: step 2/4. Its function is as follows. Catalyzes the isomerization between 2-isopropylmalate and 3-isopropylmalate, via the formation of 2-isopropylmaleate. In Desulfovibrio desulfuricans (strain ATCC 27774 / DSM 6949 / MB), this protein is 3-isopropylmalate dehydratase large subunit.